Reading from the N-terminus, the 95-residue chain is Citrate lyase acyl carrier protein (95 aa).

S14 carries the O-(phosphoribosyl dephospho-coenzyme A)serine modification.

Belongs to the CitD family. As to quaternary structure, oligomer with a subunit composition of (alpha,beta,gamma)6.

It is found in the cytoplasm. Functionally, covalent carrier of the coenzyme of citrate lyase. This is Citrate lyase acyl carrier protein from Haemophilus influenzae (strain 86-028NP).